Consider the following 269-residue polypeptide: Eukaryotic translation initiation factor 3 subunit G-1 (269 aa).

The 79-residue stretch at 188–266 folds into the RRM domain; the sequence is AAIRISNLSE…LILSVEWSKP (79 aa).

It belongs to the eIF-3 subunit G family. As to quaternary structure, component of the eukaryotic translation initiation factor 3 (eIF-3) complex. The eIF-3 complex interacts with pix.

The protein localises to the cytoplasm. In terms of biological role, RNA-binding component of the eukaryotic translation initiation factor 3 (eIF-3) complex, which is involved in protein synthesis of a specialized repertoire of mRNAs and, together with other initiation factors, stimulates binding of mRNA and methionyl-tRNAi to the 40S ribosome. The eIF-3 complex specifically targets and initiates translation of a subset of mRNAs involved in cell proliferation. This subunit can bind 18S rRNA. This is Eukaryotic translation initiation factor 3 subunit G-1 from Drosophila grimshawi (Hawaiian fruit fly).